We begin with the raw amino-acid sequence, 1479 residues long: Type VII secretion system protein EssC (1479 aa).

Residues 1–229 (MHKLIIKYNK…RPPQPIQKNN (229 aa)) lie on the Cytoplasmic side of the membrane. Residues 230 to 252 (TVIWRSIIPPLVMIALTVVIFLV) traverse the membrane as a helical segment. The Extracellular segment spans residues 253–256 (RPIG). A helical membrane pass occupies residues 257–279 (IYILMMIGMSSVTIVFGITTYFS). At 280–1479 (EKKKYNKDVE…QAYQKIRWFK (1200 aa)) the chain is on the cytoplasmic side. 2 consecutive FtsK domains span residues 652 to 846 (DDIL…QDSN) and 997 to 1183 (QGPM…SEVS). ATP-binding positions include 672-679 (GTTGSGKS) and 1014-1021 (GSPGYGRT).

The protein belongs to the EssC family. Homooligomer. Interacts with EsaE.

Its subcellular location is the cell membrane. Functionally, component of the type VII secretion system (Ess). Required for the secretion of substrates including EsxA and EsxB. However, unable to support secretion of the substrate protein EsxC. The polypeptide is Type VII secretion system protein EssC (Staphylococcus aureus (strain MSSA476)).